A 106-amino-acid chain; its full sequence is ATP-dependent Clp protease adapter protein ClpS (106 aa).

The protein belongs to the ClpS family. Binds to the N-terminal domain of the chaperone ClpA.

Functionally, involved in the modulation of the specificity of the ClpAP-mediated ATP-dependent protein degradation. This Serratia proteamaculans (strain 568) protein is ATP-dependent Clp protease adapter protein ClpS.